Here is a 43-residue protein sequence, read N- to C-terminus: uncharacterized protein (43 aa).

Residues Met1–Asn43 are disordered. Acidic residues predominate over residues Glu20–Gln35.

This is an uncharacterized protein from Dictyostelium discoideum (Social amoeba).